A 475-amino-acid chain; its full sequence is LEC14B homolog (475 aa).

Residues 1–34 are disordered; that stretch reads MSYRTRFGKDNSACDSGNAVEGSGSSKGPNEVSN. Residues 23–33 are compositionally biased toward polar residues; that stretch reads SGSSKGPNEVS. WD repeat units follow at residues 211–240, 252–283, 299–329, 375–411, and 423–453; these read DEFG…YVYD, AHSS…KVWD, GHLE…QLWD, GHGV…YIYD, and HHEG…ARWE.

Belongs to the WD repeat LEC14B family.

The polypeptide is LEC14B homolog (Prunus armeniaca (Apricot)).